A 42-amino-acid chain; its full sequence is Photosystem I reaction center subunit IX (42 aa).

The helical transmembrane segment at 7-27 (FLSLGPVLLVLWLSVQATLLI) threads the bilayer.

This sequence belongs to the PsaJ family.

It is found in the cellular thylakoid membrane. In terms of biological role, may help in the organization of the PsaE and PsaF subunits. The protein is Photosystem I reaction center subunit IX of Gloeothece citriformis (strain PCC 7424) (Cyanothece sp. (strain PCC 7424)).